Reading from the N-terminus, the 271-residue chain is DNA repair protein RecO (271 aa).

It belongs to the RecO family.

In terms of biological role, involved in DNA repair and RecF pathway recombination. This is DNA repair protein RecO from Synechococcus sp. (strain CC9311).